The primary structure comprises 301 residues: UDP-3-O-acyl-N-acetylglucosamine deacetylase (301 aa).

Residues H75, H233, and D237 each contribute to the Zn(2+) site. The active-site Proton donor is the H260.

This sequence belongs to the LpxC family. Requires Zn(2+) as cofactor.

The enzyme catalyses a UDP-3-O-[(3R)-3-hydroxyacyl]-N-acetyl-alpha-D-glucosamine + H2O = a UDP-3-O-[(3R)-3-hydroxyacyl]-alpha-D-glucosamine + acetate. It functions in the pathway glycolipid biosynthesis; lipid IV(A) biosynthesis; lipid IV(A) from (3R)-3-hydroxytetradecanoyl-[acyl-carrier-protein] and UDP-N-acetyl-alpha-D-glucosamine: step 2/6. In terms of biological role, catalyzes the hydrolysis of UDP-3-O-myristoyl-N-acetylglucosamine to form UDP-3-O-myristoylglucosamine and acetate, the committed step in lipid A biosynthesis. In Aliarcobacter butzleri (strain RM4018) (Arcobacter butzleri), this protein is UDP-3-O-acyl-N-acetylglucosamine deacetylase.